Consider the following 383-residue polypeptide: uncharacterized protein (383 aa).

10 helical membrane-spanning segments follow: residues 25 to 45 (LWVA…PAVA), 53 to 73 (IYNV…PIMV), 103 to 123 (FTMV…LLTA), 139 to 159 (IAGC…MWGY), 166 to 186 (GLTL…YAPL), 200 to 220 (WQTI…AGIY), 238 to 258 (FLHY…ILLF), 272 to 292 (IFLI…ITYV), 309 to 329 (LIGA…LFGL), and 332 to 352 (GAAL…LMLV).

The protein belongs to the arsenical resistance-3 (ACR3) (TC 2.A.59) family.

Its subcellular location is the cell membrane. This is an uncharacterized protein from Synechocystis sp. (strain ATCC 27184 / PCC 6803 / Kazusa).